Consider the following 103-residue polypeptide: Large ribosomal subunit protein bL21 (103 aa).

It belongs to the bacterial ribosomal protein bL21 family. In terms of assembly, part of the 50S ribosomal subunit. Contacts protein L20.

In terms of biological role, this protein binds to 23S rRNA in the presence of protein L20. The sequence is that of Large ribosomal subunit protein bL21 from Histophilus somni (strain 129Pt) (Haemophilus somnus).